Consider the following 43-residue polypeptide: Protein PsbN (43 aa).

A helical transmembrane segment spans residues Thr5–Phe27.

The protein belongs to the PsbN family.

The protein resides in the plastid. It is found in the chloroplast thylakoid membrane. Its function is as follows. May play a role in photosystem I and II biogenesis. The sequence is that of Protein PsbN from Welwitschia mirabilis (Tree tumbo).